The following is a 473-amino-acid chain: Trigger factor (473 aa).

Residues 174–261 form the PPIase FKBP-type domain; it reads GDIAVVSFKG…LKDLKEKELP (88 aa). Residues 442 to 473 form a disordered region; it reads ATKLTTKTTTKATTKKGVKTKSKPKVNKKEKN. The segment covering 444 to 453 has biased composition (low complexity); the sequence is KLTTKTTTKA. Residues 454–467 show a composition bias toward basic residues; the sequence is TTKKGVKTKSKPKV.

The protein belongs to the FKBP-type PPIase family. Tig subfamily.

The protein resides in the cytoplasm. The catalysed reaction is [protein]-peptidylproline (omega=180) = [protein]-peptidylproline (omega=0). Its function is as follows. Involved in protein export. Acts as a chaperone by maintaining the newly synthesized protein in an open conformation. Functions as a peptidyl-prolyl cis-trans isomerase. In Prochlorococcus marinus subsp. pastoris (strain CCMP1986 / NIES-2087 / MED4), this protein is Trigger factor.